The primary structure comprises 144 residues: Aspartate carbamoyltransferase regulatory chain (144 aa).

Cys-103, Cys-108, Cys-132, and Cys-135 together coordinate Zn(2+).

Belongs to the PyrI family. In terms of assembly, contains catalytic and regulatory chains. Zn(2+) is required as a cofactor.

Functionally, involved in allosteric regulation of aspartate carbamoyltransferase. This chain is Aspartate carbamoyltransferase regulatory chain, found in Clostridium tetani (strain Massachusetts / E88).